Consider the following 67-residue polypeptide: UPF0337 protein SP_1805 (67 aa).

The tract at residues 1 to 30 (MSVEEKLNQAKGSIKEGVGKAIGDEKMEKE) is disordered.

Belongs to the UPF0337 (CsbD) family.

In Streptococcus pneumoniae serotype 4 (strain ATCC BAA-334 / TIGR4), this protein is UPF0337 protein SP_1805.